Here is a 465-residue protein sequence, read N- to C-terminus: MAP kinase-interacting serine/threonine-protein kinase 2 (465 aa).

The segment at 23–72 (ELAFSLDQPDHGDSDFGLQCSARPDMPASQPIDIPDAKKRGKKKKRGRAT) is disordered. Residues 60–66 (KKRGKKK) carry the Nuclear localization signal motif. The residue at position 74 (S74) is a Phosphoserine. The Protein kinase domain maps to 84-388 (QLQEDVLGEG…TPMVLQRNSC (305 aa)). Residues 90 to 98 (LGEGAHARV) and K113 each bind ATP. 160 to 162 (EKM) contributes to the staurosporine binding site. The active-site Proton acceptor is D205. E209 is a binding site for staurosporine. Residues T244 and T249 each carry the phosphothreonine modification. Zn(2+) is bound by residues C299, C311, and C314. Phosphothreonine is present on T379. 2 positions are modified to phosphoserine: S437 and S440. An MAP kinase binding motif is present at residues 444–448 (LAQRR). At S452 the chain carries Phosphoserine.

Belongs to the protein kinase superfamily. CAMK Ser/Thr protein kinase family. In terms of assembly, monomer. Interacts with the C-terminal regions of EIF4G1 and EIF4G2; this interaction is promoted when MAPK pathways are repressed but repressed upon ERK proteins activation. Also binds to dephosphorylated MAPK3/ERK1 and MAPK1/ERK2. Isoform 1 interaction with phosphorylated MAPK3/ERK1 and MAPK1/ERK2 protects it from dephosphorylation and inactivation. Isoform 2 interacts with ESR2 and EIF4E in the nucleus. It depends on Mg(2+) as a cofactor. Requires Zn(2+) as cofactor. Dual phosphorylation of Thr-244 and Thr-249 activates the kinase. Phosphorylation of Thr-379 activates the kinase. Phosphorylated upon arsenic trioxide As(2)O(3) treatment. Phosphorylated by MAPK1/ERK2, MAPK11 and MAPK14. Dephosphorylated by PP2A. In terms of tissue distribution, ubiquitously expressed in all tissues examined. Isoform 2 is expressed at higher levels in the ovary than is isoform 1.

The protein localises to the nucleus. It is found in the PML body. The protein resides in the cytoplasm. The catalysed reaction is L-seryl-[protein] + ATP = O-phospho-L-seryl-[protein] + ADP + H(+). The enzyme catalyses L-threonyl-[protein] + ATP = O-phospho-L-threonyl-[protein] + ADP + H(+). Inhibited by CGP57380 and staurosporine. Activated by phosphorylation in a negative-feedback regulatory manner in response to chemotherapy (e.g. cytarabine) and thus impairs the generation of antileukemic responses. Serine/threonine-protein kinase that phosphorylates SFPQ/PSF, HNRNPA1 and EIF4E. May play a role in the response to environmental stress and cytokines. Appears to regulate translation by phosphorylating EIF4E, thus increasing the affinity of this protein for the 7-methylguanosine-containing mRNA cap. Required for mediating PP2A-inhibition-induced EIF4E phosphorylation. Triggers EIF4E shuttling from cytoplasm to nucleus. Isoform 1 displays a high basal kinase activity, but isoform 2 exhibits a very low kinase activity. Acts as a mediator of the suppressive effects of IFNgamma on hematopoiesis. Negative regulator for signals that control generation of arsenic trioxide As(2)O(3)-dependent apoptosis and anti-leukemic responses. Involved in anti-apoptotic signaling in response to serum withdrawal. The protein is MAP kinase-interacting serine/threonine-protein kinase 2 (MKNK2) of Homo sapiens (Human).